Here is a 190-residue protein sequence, read N- to C-terminus: GTP cyclohydrolase 1 1 (190 aa).

It belongs to the GTP cyclohydrolase I family. In terms of assembly, homomer.

It carries out the reaction GTP + H2O = 7,8-dihydroneopterin 3'-triphosphate + formate + H(+). It functions in the pathway cofactor biosynthesis; 7,8-dihydroneopterin triphosphate biosynthesis; 7,8-dihydroneopterin triphosphate from GTP: step 1/1. The polypeptide is GTP cyclohydrolase 1 1 (Pseudomonas putida (strain ATCC 47054 / DSM 6125 / CFBP 8728 / NCIMB 11950 / KT2440)).